The primary structure comprises 344 residues: L-rhamnose-proton symporter (344 aa).

The next 10 membrane-spanning stretches (helical) occupy residues 4–24 (AIILGIIWHLVGAASAACFYA), 38–58 (WSIGGLVSWLILPWTVSYLLL), 68–88 (FSIATLLPVFLFGAMWGIGNI), 101–121 (MGIGIAIGITLIIGTLMTPIL), 137–157 (TLLGVFVALIGVAIVSYAGLL), 175–195 (LILAVMCGIFSAGMSFAMDAA), 207–227 (INSLYVALPSYVIIMGGGAII), 259–279 (ILFSALAGLMWYLQFFFYAWG), 290–310 (MSWMLHMSFYVLCGGIVGLLL), and 321–341 (VAVLCIGCLVIILAANIVGLG).

Belongs to the L-rhamnose transporter (TC 2.A.7.6) family.

It localises to the cell inner membrane. The catalysed reaction is L-rhamnopyranose(in) + H(+)(in) = L-rhamnopyranose(out) + H(+)(out). Functionally, uptake of L-rhamnose across the cytoplasmic membrane with the concomitant transport of protons into the cell (symport system). This chain is L-rhamnose-proton symporter, found in Yersinia pseudotuberculosis serotype O:1b (strain IP 31758).